We begin with the raw amino-acid sequence, 538 residues long: Bifunctional purine biosynthesis protein PurH (538 aa).

Positions 6–158 constitute an MGS-like domain; it reads KHIPAPDLHR…KNHAYVATVV (153 aa).

The protein belongs to the PurH family.

The catalysed reaction is (6R)-10-formyltetrahydrofolate + 5-amino-1-(5-phospho-beta-D-ribosyl)imidazole-4-carboxamide = 5-formamido-1-(5-phospho-D-ribosyl)imidazole-4-carboxamide + (6S)-5,6,7,8-tetrahydrofolate. The enzyme catalyses IMP + H2O = 5-formamido-1-(5-phospho-D-ribosyl)imidazole-4-carboxamide. The protein operates within purine metabolism; IMP biosynthesis via de novo pathway; 5-formamido-1-(5-phospho-D-ribosyl)imidazole-4-carboxamide from 5-amino-1-(5-phospho-D-ribosyl)imidazole-4-carboxamide (10-formyl THF route): step 1/1. It functions in the pathway purine metabolism; IMP biosynthesis via de novo pathway; IMP from 5-formamido-1-(5-phospho-D-ribosyl)imidazole-4-carboxamide: step 1/1. This Brucella ovis (strain ATCC 25840 / 63/290 / NCTC 10512) protein is Bifunctional purine biosynthesis protein PurH.